The following is a 953-amino-acid chain: Calcium-transporting ATPase type 2C member 1 (953 aa).

Residues 1–104 lie on the Cytoplasmic side of the membrane; the sequence is MDNLLPQSRF…NEFDISEDEP (104 aa). Residues 105–125 form a helical membrane-spanning segment; that stretch reads LWKKYISQFKNPLIMLLLASA. At 126–138 the chain is on the lumenal side; it reads VISVLMHQFDDAV. A helical transmembrane segment spans residues 139–157; sequence SITVAILIVVTVAFVQEYR. Residues 158-296 are Cytoplasmic-facing; that stretch reads SEKSLEELSK…APKTPLQKSM (139 aa). A helical membrane pass occupies residues 297 to 316; it reads DLLGKQLSFYSFGIIGIIML. Residues 317–328 are Lumenal-facing; it reads VGWLLGKDILEM. The chain crosses the membrane as a helical span at residues 329–346; that stretch reads FTISVSLAVAAIPEGLPI. Positions 337, 338, 340, and 342 each coordinate Ca(2+). At 347-733 the chain is on the cytoplasmic side; sequence VVTVTLALGV…EEGKGIYNNI (387 aa). Asp384 (4-aspartylphosphate intermediate) is an active-site residue. The Mg(2+) site is built by Asp678 and Asp682. The chain crosses the membrane as a helical span at residues 734-753; it reads KNFVRFQLSTSIAALTLISL. Over 754 to 763 the chain is Lumenal; sequence ATLMNFPNPL. The helical transmembrane segment at 764-784 threads the bilayer; that stretch reads NAMQILWINIIMDGPPAQSLG. The Ca(2+) site is built by Asn772 and Asp776. The Cytoplasmic segment spans residues 785–804; the sequence is VEPVDKDVIRKPPRNWKDSI. The chain crosses the membrane as a helical span at residues 805–824; sequence LTKNLILKILVSSIIIVCGT. At 825–842 the chain is on the lumenal side; that stretch reads LFVFWRELRDNVITPRDT. A helical transmembrane segment spans residues 843–862; that stretch reads TMTFTCFVFFDMFNALSSRS. The Cytoplasmic segment spans residues 863-875; sequence QTKSVFEIGLCSN. A helical membrane pass occupies residues 876–894; that stretch reads KMFCYAVLGSIMGQLLVIY. The Lumenal segment spans residues 895 to 909; sequence FPPLQKVFQTESLSI. A helical transmembrane segment spans residues 910–930; sequence LDLLFLLGLTSSVCIVAEIIK. Residues 931–953 lie on the Cytoplasmic side of the membrane; sequence KVERSREKIQKPVSSTSSSFLEV.

This sequence belongs to the cation transport ATPase (P-type) (TC 3.A.3) family. Type IIA subfamily. As to quaternary structure, monomer. Homodimer.

The protein localises to the golgi apparatus. It localises to the trans-Golgi network membrane. It is found in the golgi stack membrane. It catalyses the reaction Ca(2+)(in) + ATP + H2O = Ca(2+)(out) + ADP + phosphate + H(+). The catalysed reaction is Mn(2+)(in) + ATP + H2O = Mn(2+)(out) + ADP + phosphate + H(+). Functionally, ATP-driven pump that supplies the Golgi apparatus with Ca(2+) and Mn(2+) ions, both essential cofactors for processing and trafficking of newly synthesized proteins in the secretory pathway. Within a catalytic cycle, acquires Ca(2+) or Mn(2+) ions on the cytoplasmic side of the membrane and delivers them to the lumenal side. The transfer of ions across the membrane is coupled to ATP hydrolysis and is associated with a transient phosphorylation that shifts the pump conformation from inward-facing to outward-facing state. Plays a primary role in the maintenance of Ca(2+) homeostasis in the trans-Golgi compartment with a functional impact on Golgi and post-Golgi protein sorting as well as a structural impact on cisternae morphology. Responsible for loading the Golgi stores with Ca(2+) ions in keratinocytes, contributing to keratinocyte differentiation and epidermis integrity. Participates in Ca(2+) and Mn(2+) ions uptake into the Golgi store of hippocampal neurons and regulates protein trafficking required for neural polarity. May also play a role in the maintenance of Ca(2+) and Mn(2+) homeostasis and signaling in the cytosol while preventing cytotoxicity. The chain is Calcium-transporting ATPase type 2C member 1 (ATP2C1) from Bos taurus (Bovine).